We begin with the raw amino-acid sequence, 255 residues long: ATP synthase subunit a 2 (255 aa).

5 consecutive transmembrane segments (helical) span residues 24–44, 86–106, 131–151, 205–225, and 226–246; these read WFGI…VFIL, LIGP…AVDL, DINI…GYTF, MIFI…SVPW, and ALFH…LTVV.

It belongs to the ATPase A chain family. As to quaternary structure, F-type ATPases have 2 components, CF(1) - the catalytic core - and CF(0) - the membrane proton channel. CF(1) has five subunits: alpha(3), beta(3), gamma(1), delta(1), epsilon(1). CF(0) has three main subunits: a(1), b(2) and c(9-12). The alpha and beta chains form an alternating ring which encloses part of the gamma chain. CF(1) is attached to CF(0) by a central stalk formed by the gamma and epsilon chains, while a peripheral stalk is formed by the delta and b chains.

The protein localises to the cell inner membrane. In terms of biological role, key component of the proton channel; it plays a direct role in the translocation of protons across the membrane. This chain is ATP synthase subunit a 2, found in Vibrio campbellii (strain ATCC BAA-1116).